A 254-amino-acid chain; its full sequence is Pyrroloquinoline-quinone synthase (254 aa).

Belongs to the PqqC family.

It carries out the reaction 6-(2-amino-2-carboxyethyl)-7,8-dioxo-1,2,3,4,7,8-hexahydroquinoline-2,4-dicarboxylate + 3 O2 = pyrroloquinoline quinone + 2 H2O2 + 2 H2O + H(+). Its pathway is cofactor biosynthesis; pyrroloquinoline quinone biosynthesis. Ring cyclization and eight-electron oxidation of 3a-(2-amino-2-carboxyethyl)-4,5-dioxo-4,5,6,7,8,9-hexahydroquinoline-7,9-dicarboxylic-acid to PQQ. This Rhodopseudomonas palustris (strain TIE-1) protein is Pyrroloquinoline-quinone synthase.